A 138-amino-acid polypeptide reads, in one-letter code: Acidic phospholipase A2 CoaPLA2 (138 aa).

Positions 1 to 16 are cleaved as a signal peptide; that stretch reads MRTLWIVAVLLLGVEG. 7 cysteine pairs are disulfide-bonded: Cys-42/Cys-131, Cys-44/Cys-60, Cys-59/Cys-111, Cys-65/Cys-138, Cys-66/Cys-104, Cys-73/Cys-97, and Cys-91/Cys-102. Ca(2+) is bound by residues Tyr-43, Gly-45, and Gly-47. Residue His-63 is part of the active site. Asp-64 contributes to the Ca(2+) binding site. Asp-105 is an active-site residue.

It belongs to the phospholipase A2 family. Group II subfamily. D49 sub-subfamily. Homodimer. The cofactor is Ca(2+). As to expression, expressed by the venom gland.

Its subcellular location is the secreted. The enzyme catalyses a 1,2-diacyl-sn-glycero-3-phosphocholine + H2O = a 1-acyl-sn-glycero-3-phosphocholine + a fatty acid + H(+). In terms of biological role, snake venom phospholipase A2 (PLA2) that shows very low inhibition of ADP-induced platelet aggregation in platelet-rich plasma of human, rabbit and guinea pig. Shows edema-inducing activity and myotoxicity. PLA2 catalyzes the calcium-dependent hydrolysis of the 2-acyl groups in 3-sn-phosphoglycerides. The sequence is that of Acidic phospholipase A2 CoaPLA2 from Crotalus lutosus abyssus (Grand Canyon rattlesnake).